The sequence spans 423 residues: Gamma-glutamyl phosphate reductase (423 aa).

Belongs to the gamma-glutamyl phosphate reductase family.

Its subcellular location is the cytoplasm. It carries out the reaction L-glutamate 5-semialdehyde + phosphate + NADP(+) = L-glutamyl 5-phosphate + NADPH + H(+). It participates in amino-acid biosynthesis; L-proline biosynthesis; L-glutamate 5-semialdehyde from L-glutamate: step 2/2. Catalyzes the NADPH-dependent reduction of L-glutamate 5-phosphate into L-glutamate 5-semialdehyde and phosphate. The product spontaneously undergoes cyclization to form 1-pyrroline-5-carboxylate. This Burkholderia pseudomallei (strain 1710b) protein is Gamma-glutamyl phosphate reductase.